The chain runs to 234 residues: Sugar fermentation stimulation protein A (234 aa).

Residues 201-220 constitute a DNA-binding region (H-T-H motif); that stretch reads LLSEAQNKGVEVLAYKAELS.

Belongs to the SfsA family.

Its function is as follows. Binds to DNA non-specifically. Could be a regulatory factor involved in maltose metabolism. The sequence is that of Sugar fermentation stimulation protein A from Salmonella typhi.